The chain runs to 490 residues: Betaine aldehyde dehydrogenase (490 aa).

2 residues coordinate K(+): Ile27 and Asp93. Position 150–152 (150–152 (GAW)) interacts with NAD(+). The Charge relay system role is filled by Lys162. 176–179 (KPSE) contributes to the NAD(+) binding site. Position 180 (Val180) interacts with K(+). NAD(+) is bound at residue 230 to 233 (GTTT). Leu246 lines the K(+) pocket. Glu252 functions as the Proton acceptor in the catalytic mechanism. Gly254, Cys286, and Glu387 together coordinate NAD(+). The active-site Nucleophile is the Cys286. Cysteine sulfenic acid (-SOH) is present on Cys286. 2 residues coordinate K(+): Lys457 and Gly460. Catalysis depends on Glu464, which acts as the Charge relay system.

It belongs to the aldehyde dehydrogenase family. As to quaternary structure, dimer of dimers. Requires K(+) as cofactor.

It carries out the reaction betaine aldehyde + NAD(+) + H2O = glycine betaine + NADH + 2 H(+). It participates in amine and polyamine biosynthesis; betaine biosynthesis via choline pathway; betaine from betaine aldehyde: step 1/1. Functionally, involved in the biosynthesis of the osmoprotectant glycine betaine. Catalyzes the irreversible oxidation of betaine aldehyde to the corresponding acid. This Pseudomonas entomophila (strain L48) protein is Betaine aldehyde dehydrogenase.